Here is a 367-residue protein sequence, read N- to C-terminus: Aminomethyltransferase (367 aa).

The protein belongs to the GcvT family. The glycine cleavage system is composed of four proteins: P, T, L and H.

The catalysed reaction is N(6)-[(R)-S(8)-aminomethyldihydrolipoyl]-L-lysyl-[protein] + (6S)-5,6,7,8-tetrahydrofolate = N(6)-[(R)-dihydrolipoyl]-L-lysyl-[protein] + (6R)-5,10-methylene-5,6,7,8-tetrahydrofolate + NH4(+). Its function is as follows. The glycine cleavage system catalyzes the degradation of glycine. This Shouchella clausii (strain KSM-K16) (Alkalihalobacillus clausii) protein is Aminomethyltransferase.